Reading from the N-terminus, the 278-residue chain is Phosphatidylglycerol--prolipoprotein diacylglyceryl transferase (278 aa).

4 helical membrane-spanning segments follow: residues 12–32 (FGPL…LIGL), 44–64 (LENG…VIGA), 86–106 (IWEG…TLIL), and 113–133 (QPFL…QAIG). Position 134 (R134) interacts with a 1,2-diacyl-sn-glycero-3-phospho-(1'-sn-glycerol). A run of 3 helical transmembrane segments spans residues 173–193 (PTFL…LVLF), 203–223 (FPAG…RIWI), and 246–266 (IAQL…WWLK).

It belongs to the Lgt family.

The protein localises to the cell inner membrane. The catalysed reaction is L-cysteinyl-[prolipoprotein] + a 1,2-diacyl-sn-glycero-3-phospho-(1'-sn-glycerol) = an S-1,2-diacyl-sn-glyceryl-L-cysteinyl-[prolipoprotein] + sn-glycerol 1-phosphate + H(+). It participates in protein modification; lipoprotein biosynthesis (diacylglyceryl transfer). Its function is as follows. Catalyzes the transfer of the diacylglyceryl group from phosphatidylglycerol to the sulfhydryl group of the N-terminal cysteine of a prolipoprotein, the first step in the formation of mature lipoproteins. The polypeptide is Phosphatidylglycerol--prolipoprotein diacylglyceryl transferase (Parasynechococcus marenigrum (strain WH8102)).